The following is a 62-amino-acid chain: MAKCAICEKGVTVGIKLSHSHIRTKRTWNPNLQRVKAIVDGSPKRIMVCTRCLRSGKVQRAI.

This sequence belongs to the bacterial ribosomal protein bL28 family.

The polypeptide is Large ribosomal subunit protein bL28 (Desulforamulus reducens (strain ATCC BAA-1160 / DSM 100696 / MI-1) (Desulfotomaculum reducens)).